A 171-amino-acid polypeptide reads, in one-letter code: Transcription elongation factor GreB (171 aa).

Residues 53 to 75 (KKRLREIDRRVRFLAKRLEVLKI) adopt a coiled-coil conformation.

Belongs to the GreA/GreB family. GreB subfamily.

Necessary for efficient RNA polymerase transcription elongation past template-encoded arresting sites. The arresting sites in DNA have the property of trapping a certain fraction of elongating RNA polymerases that pass through, resulting in locked ternary complexes. Cleavage of the nascent transcript by cleavage factors such as GreA or GreB allows the resumption of elongation from the new 3'terminus. GreB releases sequences of up to 9 nucleotides in length. The protein is Transcription elongation factor GreB of Yersinia pestis.